Consider the following 410-residue polypeptide: Putative nickel insertion protein (410 aa).

The protein belongs to the LarC family.

The protein is Putative nickel insertion protein of Cyanothece sp. (strain PCC 7425 / ATCC 29141).